The following is a 344-amino-acid chain: tRNA N6-adenosine threonylcarbamoyltransferase (344 aa).

His-110 and His-114 together coordinate Fe cation. Residues 133–137 (VVSGA), Asp-166, Gly-179, and Asn-278 contribute to the substrate site. Residue Asp-303 participates in Fe cation binding.

The protein belongs to the KAE1 / TsaD family. Requires Fe(2+) as cofactor.

The protein localises to the cytoplasm. It carries out the reaction L-threonylcarbamoyladenylate + adenosine(37) in tRNA = N(6)-L-threonylcarbamoyladenosine(37) in tRNA + AMP + H(+). In terms of biological role, required for the formation of a threonylcarbamoyl group on adenosine at position 37 (t(6)A37) in tRNAs that read codons beginning with adenine. Is involved in the transfer of the threonylcarbamoyl moiety of threonylcarbamoyl-AMP (TC-AMP) to the N6 group of A37, together with TsaE and TsaB. TsaD likely plays a direct catalytic role in this reaction. This chain is tRNA N6-adenosine threonylcarbamoyltransferase, found in Chlamydia abortus (strain DSM 27085 / S26/3) (Chlamydophila abortus).